An 884-amino-acid polypeptide reads, in one-letter code: Telomerase reverse transcriptase (884 aa).

The Reverse transcriptase domain occupies 422 to 725 (CRNHNSYTLS…TVIQFCAMHI (304 aa)). Asp-530, Asp-670, and Asp-671 together coordinate Mg(2+).

Belongs to the reverse transcriptase family. Telomerase subfamily. As to quaternary structure, catalytic subunit of the telomerase holoenzyme complex composed minimally of EST2 and the telomerase RNA template component.

The protein resides in the nucleus. The protein localises to the chromosome. It is found in the telomere. It carries out the reaction DNA(n) + a 2'-deoxyribonucleoside 5'-triphosphate = DNA(n+1) + diphosphate. Telomerase is a ribonucleoprotein enzyme essential for the replication of chromosome termini in most eukaryotes. It elongates telomeres. It is a reverse transcriptase that adds simple sequence repeats to chromosome ends by copying a template sequence within the RNA component of the enzyme. In Saccharomyces cerevisiae (strain ATCC 204508 / S288c) (Baker's yeast), this protein is Telomerase reverse transcriptase (EST2).